Consider the following 472-residue polypeptide: MAGGEAGVTLGQPHLSRQDLTTLDVTKLTPLSHEVISRQATINIGTIGHVAHGKSTVVKAISGVHTVRFKNELERNITIKLGYANAKIYQLDDPSCPRPECYRSCGSSMPDEFPTDIPGTKGNFRLVRHVSFVDCPGHDILMATMLNGAAVMDAALLLIAGNESCPQPQTSEHLAAIEIMKLKHILILQNKIDLVKERQAKEQYEQILAFVQGTVAEGAPIIPISAQLKYNIEVVCEYIVKKIPVPPRDFTSEPRLIVIRSFDVNKPGCEVDDLKGGVAGGSILKGVLKVGQETEVRPGIVSKDSEGKLMCKSIFSKIVSLFAEHNDLQYAAPGGLIGVGTKIDPTLCRADRMVGQILGAVGALPEIFTELEISYFLLRRLLGVRTEGDKKAAKVQKLSKNEVLMVNIGSLSTGGRVSAVKADLGKIVLTNPVCTEVGEKIALSRRVEKHWRLIGWGQIRRGVTIKPTVDDD.

Ala2 carries the post-translational modification N-acetylalanine. Ser16 is modified (phosphoserine). Residues 39 to 248 form the tr-type G domain; that stretch reads QATINIGTIG…IVKKIPVPPR (210 aa). The interval 48 to 55 is G1; the sequence is GHVAHGKS. 51–56 contacts GTP; the sequence is AHGKST. Residues 76-80 are G2; the sequence is NITIK. The segment at 134-137 is G3; the sequence is DCPG. GTP-binding positions include 190–193 and 225–227; these read NKID and SAQ. The interval 190–193 is G4; it reads NKID. The tract at residues 225–227 is G5; it reads SAQ.

It belongs to the TRAFAC class translation factor GTPase superfamily. Classic translation factor GTPase family. EIF2G subfamily. EIF2 is a heterotrimer composed of an alpha, a beta and a gamma chain. eIF2 is member of the 43S pre-initiation complex (43S PIC). Specifically expressed in testis at the mRNA level.

It catalyses the reaction GTP + H2O = GDP + phosphate + H(+). In terms of biological role, member of the eIF2 complex that functions in the early steps of protein synthesis by forming a ternary complex with GTP and initiator tRNA. This complex binds to a 40S ribosomal subunit, followed by mRNA binding to form the 43S pre-initiation complex (43S PIC). Junction of the 60S ribosomal subunit to form the 80S initiation complex is preceded by hydrolysis of the GTP bound to eIF2 and release of an eIF2-GDP binary complex. In order for eIF2 to recycle and catalyze another round of initiation, the GDP bound to eIF2 must exchange with GTP by way of a reaction catalyzed by eIF-2B. The chain is Eukaryotic translation initiation factor 2 subunit 3B from Homo sapiens (Human).